The following is a 324-amino-acid chain: MKIEAVPGAPQDGEFEFVLAAEKEFEEIISISHGIYGGLDYLPSRYHSWINEKDRMVVLAKKDGTVIGLLSVFVVDGGETALLEGLRVAPWERGRGVAGVLQRFCIKLVKHRYPSVKVMRLTRDDKLSAKELTKYRVIAKQGILLLSFNAPDLASRLSSIPLPPAASRPPPPIELTPEDVRDVFLERGGLLKDLLPNQTIIQDWQPFQALPGNQDLLRRKTLCWMVDDLIQPQVATLCTAPFPVPAGPLCFYLNIDVFGSELQSVQEQLLSHLHAHVPKLPADVRCQLFLPPNLWRPMADFCTLVLGLHLEKGYTEQYLLEADI.

The region spanning 15–151 is the N-acetyltransferase domain; sequence FEFVLAAEKE…GILLLSFNAP (137 aa).

It catalyses the reaction L-histidine + acetyl-CoA = N(alpha)-acetyl-L-histidine + CoA + H(+). Its function is as follows. Enzyme responsible for the N-acetyl-histidine (NAH) synthesis, which is a major constituent of brain and lens of ectothermic vertebrates. This Xenopus tropicalis (Western clawed frog) protein is Histidine N-acetyltransferase (hisat).